A 126-amino-acid chain; its full sequence is Adult-specific rigid cuticular protein 12.4 (126 aa).

The region spanning 9 to 87 is the Chitin-binding type R&amp;R domain; the sequence is GGAYNFGFNT…AMAALAPKAP (79 aa).

Its function is as follows. Component of the rigid cuticle of the spider. The protein is Adult-specific rigid cuticular protein 12.4 of Araneus diadematus (European garden spider).